The primary structure comprises 689 residues: Armadillo-like helical domain-containing protein 3 (689 aa).

The helical transmembrane segment at 520–538 (IFTLTLMVVNLFNMFITYG) threads the bilayer.

The protein belongs to the ARMH3 family.

It is found in the golgi apparatus membrane. The protein localises to the cytoplasm. May be involved in Golgi maintenance and protein secretion. The chain is Armadillo-like helical domain-containing protein 3 from Xenopus laevis (African clawed frog).